Here is a 245-residue protein sequence, read N- to C-terminus: 5-oxoprolinase subunit A (245 aa).

This sequence belongs to the LamB/PxpA family. In terms of assembly, forms a complex composed of PxpA, PxpB and PxpC.

It catalyses the reaction 5-oxo-L-proline + ATP + 2 H2O = L-glutamate + ADP + phosphate + H(+). In terms of biological role, catalyzes the cleavage of 5-oxoproline to form L-glutamate coupled to the hydrolysis of ATP to ADP and inorganic phosphate. In Haemophilus influenzae (strain 86-028NP), this protein is 5-oxoprolinase subunit A.